The primary structure comprises 565 residues: NAD-dependent malic enzyme (565 aa).

The active-site Proton donor is tyrosine 104. NAD(+) is bound at residue arginine 157. Lysine 175 acts as the Proton acceptor in catalysis. A divalent metal cation-binding residues include glutamate 246, aspartate 247, and aspartate 270. NAD(+) is bound by residues aspartate 270 and asparagine 418.

Belongs to the malic enzymes family. In terms of assembly, homotetramer. The cofactor is Mg(2+). It depends on Mn(2+) as a cofactor.

It carries out the reaction (S)-malate + NAD(+) = pyruvate + CO2 + NADH. The catalysed reaction is oxaloacetate + H(+) = pyruvate + CO2. This is NAD-dependent malic enzyme from Shigella boydii serotype 18 (strain CDC 3083-94 / BS512).